The primary structure comprises 152 residues: Photosystem II extrinsic protein U, chloroplastic (152 aa).

Residues 1-35 constitute a chloroplast transit peptide; it reads MDSTAFVGAAAPLRVAAAARSTICMAAADDKPVVS. The N-terminal 24 residues, 36–59, are a transit peptide targeting the thylakoid; that stretch reads RRAALTGAAAAALAAVAGSLPALA.

The protein belongs to the PsbU family. PSII is composed of 1 copy each of membrane proteins PsbA, PsbB, PsbC, PsbD, PsbE, PsbF, PsbH, PsbI, PsbJ, PsbK, PsbL, PsbM, PsbT, PsbX, PsbY, PsbZ, Psb30/Ycf12, at least 3 peripheral proteins of the oxygen-evolving complex and a large number of cofactors. It forms dimeric complexes. The oxygen-evolving complex in red algae is composed of PsbO (OEC33), PsbQ', cytochrome c-550 and PsbU. Predicted to be translocated into the thylakoid lumen by the Tat system.

It is found in the plastid. Its subcellular location is the chloroplast thylakoid membrane. In terms of biological role, one of the extrinsic, lumenal subunits of photosystem II (PSII). PSII is a light-driven water plastoquinone oxidoreductase, using light energy to abstract electrons from H(2)O, generating a proton gradient subsequently used for ATP formation. The extrinsic proteins stabilize the structure of photosystem II oxygen-evolving complex (OEC), the ion environment of oxygen evolution and protect the OEC against heat-induced inactivation. This Pyropia yezoensis (Susabi-nori) protein is Photosystem II extrinsic protein U, chloroplastic.